A 421-amino-acid polypeptide reads, in one-letter code: UDP-N-acetylglucosamine 1-carboxyvinyltransferase 1 (421 aa).

22–23 (KN) is a binding site for phosphoenolpyruvate. R95 serves as a coordination point for UDP-N-acetyl-alpha-D-glucosamine. C119 (proton donor) is an active-site residue. 2-(S-cysteinyl)pyruvic acid O-phosphothioketal is present on C119. Residues 124-128 (RPIEQ), D308, and V330 contribute to the UDP-N-acetyl-alpha-D-glucosamine site.

Belongs to the EPSP synthase family. MurA subfamily.

The protein resides in the cytoplasm. The enzyme catalyses phosphoenolpyruvate + UDP-N-acetyl-alpha-D-glucosamine = UDP-N-acetyl-3-O-(1-carboxyvinyl)-alpha-D-glucosamine + phosphate. The protein operates within cell wall biogenesis; peptidoglycan biosynthesis. Cell wall formation. Adds enolpyruvyl to UDP-N-acetylglucosamine. The chain is UDP-N-acetylglucosamine 1-carboxyvinyltransferase 1 from Staphylococcus aureus (strain MW2).